The sequence spans 431 residues: V-type ATP synthase beta chain (431 aa).

This sequence belongs to the ATPase alpha/beta chains family.

Its function is as follows. Produces ATP from ADP in the presence of a proton gradient across the membrane. The V-type beta chain is a regulatory subunit. The sequence is that of V-type ATP synthase beta chain from Treponema denticola (strain ATCC 35405 / DSM 14222 / CIP 103919 / JCM 8153 / KCTC 15104).